We begin with the raw amino-acid sequence, 423 residues long: 26S proteasome regulatory subunit 6B homolog (423 aa).

Position 207-214 (207-214) interacts with ATP; it reads GPPGTGKT.

It belongs to the AAA ATPase family.

It localises to the cytoplasm. It is found in the nucleus. Functionally, the 26S proteasome is involved in the ATP-dependent degradation of ubiquitinated proteins. The regulatory (or ATPase) complex confers ATP dependency and substrate specificity to the 26S complex. The chain is 26S proteasome regulatory subunit 6B homolog (tbpA) from Aspergillus niger.